The sequence spans 516 residues: Threonine synthase 2, chloroplastic (516 aa).

Residues 1–33 (MASFSLPHSATYFPSHSETSLKPHSAASFTVRC) constitute a chloroplast transit peptide. The span at 1 to 37 (MASFSLPHSATYFPSHSETSLKPHSAASFTVRCTSAS) shows a compositional bias: polar residues. The segment at 1–55 (MASFSLPHSATYFPSHSETSLKPHSAASFTVRCTSASPAVPPQTPQKPRRSPDEN) is disordered. S-adenosyl-L-methionine contacts are provided by residues 133-135 (PYG), 156-158 (SAF), N163, L164, K172, and N178. At K194 the chain carries N6-(pyridoxal phosphate)lysine. Pyridoxal 5'-phosphate contacts are provided by residues 326–330 (GNLGN) and T464.

The protein belongs to the threonine synthase family. In terms of assembly, homodimer. The cofactor is pyridoxal 5'-phosphate.

It localises to the plastid. The protein resides in the chloroplast. The enzyme catalyses O-phospho-L-homoserine + H2O = L-threonine + phosphate. It functions in the pathway amino-acid biosynthesis; L-threonine biosynthesis; L-threonine from L-aspartate: step 5/5. With respect to regulation, allosterically activated by S-adenosyl-methionine (SAM). In terms of biological role, catalyzes the gamma-elimination of phosphate from L-phosphohomoserine and the beta-addition of water to produce L-threonine. The chain is Threonine synthase 2, chloroplastic (TS2) from Arabidopsis thaliana (Mouse-ear cress).